We begin with the raw amino-acid sequence, 115 residues long: UPF0127 protein PH1112 (115 aa).

The protein belongs to the UPF0127 family.

This Pyrococcus horikoshii (strain ATCC 700860 / DSM 12428 / JCM 9974 / NBRC 100139 / OT-3) protein is UPF0127 protein PH1112.